The following is a 375-amino-acid chain: Succinyl-diaminopimelate desuccinylase (375 aa).

A Zn(2+)-binding site is contributed by His66. Asp68 is an active-site residue. Asp99 provides a ligand contact to Zn(2+). The Proton acceptor role is filled by Glu133. Zn(2+)-binding residues include Glu134, Glu162, and His348.

It belongs to the peptidase M20A family. DapE subfamily. Homodimer. The cofactor is Zn(2+). Co(2+) is required as a cofactor.

The catalysed reaction is N-succinyl-(2S,6S)-2,6-diaminopimelate + H2O = (2S,6S)-2,6-diaminopimelate + succinate. Its pathway is amino-acid biosynthesis; L-lysine biosynthesis via DAP pathway; LL-2,6-diaminopimelate from (S)-tetrahydrodipicolinate (succinylase route): step 3/3. Its function is as follows. Catalyzes the hydrolysis of N-succinyl-L,L-diaminopimelic acid (SDAP), forming succinate and LL-2,6-diaminopimelate (DAP), an intermediate involved in the bacterial biosynthesis of lysine and meso-diaminopimelic acid, an essential component of bacterial cell walls. In Klebsiella pneumoniae (strain 342), this protein is Succinyl-diaminopimelate desuccinylase.